The following is a 191-amino-acid chain: Glycerol-3-phosphate acyltransferase (191 aa).

A run of 5 helical transmembrane segments spans residues 5–25, 50–70, 78–98, 112–132, and 153–173; these read IVFV…ITKI, CIAA…VYIA, SFHM…PVWL, ILIA…LAVF, and SFFF…LIFF.

This sequence belongs to the PlsY family. Probably interacts with PlsX.

It localises to the cell membrane. It carries out the reaction an acyl phosphate + sn-glycerol 3-phosphate = a 1-acyl-sn-glycero-3-phosphate + phosphate. Its pathway is lipid metabolism; phospholipid metabolism. Its function is as follows. Catalyzes the transfer of an acyl group from acyl-phosphate (acyl-PO(4)) to glycerol-3-phosphate (G3P) to form lysophosphatidic acid (LPA). This enzyme utilizes acyl-phosphate as fatty acyl donor, but not acyl-CoA or acyl-ACP. The protein is Glycerol-3-phosphate acyltransferase of Wolbachia sp. subsp. Brugia malayi (strain TRS).